We begin with the raw amino-acid sequence, 118 residues long: Large ribosomal subunit protein bL20 (118 aa).

The protein belongs to the bacterial ribosomal protein bL20 family.

Its function is as follows. Binds directly to 23S ribosomal RNA and is necessary for the in vitro assembly process of the 50S ribosomal subunit. It is not involved in the protein synthesizing functions of that subunit. The chain is Large ribosomal subunit protein bL20 from Desulfovibrio desulfuricans (strain ATCC 27774 / DSM 6949 / MB).